The following is a 2571-amino-acid chain: Highly reducing polyketide synthase 19 (2571 aa).

Residues Met-1 to Pro-51 are disordered. The span at Leu-27–Ser-38 shows a compositional bias: polar residues. Positions Pro-51–Ser-485 constitute a Ketosynthase family 3 (KS3) domain. Active-site for beta-ketoacyl synthase activity residues include Cys-224, His-359, and His-398. Positions Val-609–Lys-932 are malonyl-CoA:ACP transacylase (MAT) domain. Ser-701 serves as the catalytic For malonyltransferase activity. The N-terminal hotdog fold stretch occupies residues His-1019–Asp-1163. Residues His-1019–Ser-1340 form a dehydratase (DH) domain region. The 326-residue stretch at His-1019 to Val-1344 folds into the PKS/mFAS DH domain. His-1051 acts as the Proton acceptor; for dehydratase activity in catalysis. A C-terminal hotdog fold region spans residues Met-1177–Val-1344. Asp-1241 serves as the catalytic Proton donor; for dehydratase activity. An enoyl reductase (ER) domain region spans residues Asn-1800–Thr-2140. The tract at residues Ser-2177–Ser-2355 is ketoreductase (KR) domain. The 79-residue stretch at Ala-2490 to Leu-2568 folds into the Carrier domain. Position 2527 is an O-(pantetheine 4'-phosphoryl)serine (Ser-2527).

It participates in polyketide biosynthesis. In terms of biological role, highly reducing polyketide synthase; part of the gene cluster that mediates the biosynthesis of pyriculol and pyriculariol, two heptaketides that induce lesion formation upon application on rice leaves but are dispensable for pathogenicity. The highly reducing polyketide synthase synthesizes the heptaketide backbone of pyriculol and pyriculariol. Pyriculol and pyriculariol contain several hydroxyl moieties and double bonds, so it can be assumed that several reduction steps occur during biosynthesis. These reactions could be executed by PKS19 itself or partly by the tailoring enzymes OXR1, PXR2, RED1, RED2 or RED3, identified within the cluster. The FAD-linked oxidoreductase OXR1 is the only tailoring enzyme for which the function has been determined yet, and is involved in the oxidation of dihydropyriculol and dihydropyriculariol into pyriculol and pyriculariol, respectively. In Pyricularia oryzae (strain 70-15 / ATCC MYA-4617 / FGSC 8958) (Rice blast fungus), this protein is Highly reducing polyketide synthase 19.